The following is a 231-amino-acid chain: Phosphatidylserine decarboxylase proenzyme (231 aa).

S189 serves as the catalytic Schiff-base intermediate with substrate; via pyruvic acid. Residue S189 is modified to Pyruvic acid (Ser); by autocatalysis.

The protein belongs to the phosphatidylserine decarboxylase family. PSD-A subfamily. Heterodimer of a large membrane-associated beta subunit and a small pyruvoyl-containing alpha subunit. Pyruvate is required as a cofactor. Is synthesized initially as an inactive proenzyme. Formation of the active enzyme involves a self-maturation process in which the active site pyruvoyl group is generated from an internal serine residue via an autocatalytic post-translational modification. Two non-identical subunits are generated from the proenzyme in this reaction, and the pyruvate is formed at the N-terminus of the alpha chain, which is derived from the carboxyl end of the proenzyme. The post-translation cleavage follows an unusual pathway, termed non-hydrolytic serinolysis, in which the side chain hydroxyl group of the serine supplies its oxygen atom to form the C-terminus of the beta chain, while the remainder of the serine residue undergoes an oxidative deamination to produce ammonia and the pyruvoyl prosthetic group on the alpha chain.

The protein resides in the cell membrane. The enzyme catalyses a 1,2-diacyl-sn-glycero-3-phospho-L-serine + H(+) = a 1,2-diacyl-sn-glycero-3-phosphoethanolamine + CO2. It functions in the pathway phospholipid metabolism; phosphatidylethanolamine biosynthesis; phosphatidylethanolamine from CDP-diacylglycerol: step 2/2. Functionally, catalyzes the formation of phosphatidylethanolamine (PtdEtn) from phosphatidylserine (PtdSer). This Chelativorans sp. (strain BNC1) protein is Phosphatidylserine decarboxylase proenzyme.